The sequence spans 130 residues: Small ribosomal subunit protein uS11c (130 aa).

This sequence belongs to the universal ribosomal protein uS11 family. As to quaternary structure, part of the 30S ribosomal subunit.

It localises to the plastid. Its subcellular location is the chloroplast. This is Small ribosomal subunit protein uS11c from Zygnema circumcarinatum (Green alga).